The primary structure comprises 346 residues: UDP-3-O-acylglucosamine N-acyltransferase (346 aa).

H253 serves as the catalytic Proton acceptor.

The protein belongs to the transferase hexapeptide repeat family. LpxD subfamily. In terms of assembly, homotrimer.

It carries out the reaction a UDP-3-O-[(3R)-3-hydroxyacyl]-alpha-D-glucosamine + a (3R)-hydroxyacyl-[ACP] = a UDP-2-N,3-O-bis[(3R)-3-hydroxyacyl]-alpha-D-glucosamine + holo-[ACP] + H(+). The protein operates within bacterial outer membrane biogenesis; LPS lipid A biosynthesis. Its function is as follows. Catalyzes the N-acylation of UDP-3-O-acylglucosamine using 3-hydroxyacyl-ACP as the acyl donor. Is involved in the biosynthesis of lipid A, a phosphorylated glycolipid that anchors the lipopolysaccharide to the outer membrane of the cell. The sequence is that of UDP-3-O-acylglucosamine N-acyltransferase from Rickettsia conorii (strain ATCC VR-613 / Malish 7).